A 512-amino-acid chain; its full sequence is MESPSYKNLIKAEDAQKKAGKRLLSSEWYPGFHVTPLTGWMNDPNGLIFFKGEYHLFYQYYPFAPVWGPMHWGHAKSRDLVHWETLPVALAPGDSFDRDGCFSGCAVDNNGVLTLIYTGHIVLSNDSLDAIREVQCMATSIDGIHFQKEGIVLEKAPMPQVAHFRDPRVWKENNHWFMVVGYRTDDEKHQGIGHVALYRSENLKDWIFVKTLLGDNSQLPLGKRAFMWECPDFFSLGNRSVLMFSPQGLKASGYKNRNLFQNGYILGKWQAPQFTPETSFQELDYGHDFYAAQRFEAKDGRQILIAWFDMWENQKPSQRDGWAGCMTLPRKLDLIDNKIVMTPVREMEILRQSEKIESVVTLSDAEHPFTMDSPLQEIELIFDLEKSSAYQAGLALRCNGKGQETLLYIDRSQNRIILDRNRSGQNVKGIRSCPLPNTSKVRLHIFLDRSSIEIFVGDDQTQGLYSISSRIFPDKDSLKGRLFAIEGYAVFDSFKRWTLQDANLAAFSSDAC.

Substrate-binding positions include 40-43 (WMND), Q59, W67, 102-103 (FS), 165-166 (RD), E229, and W311. The active site involves D43.

The protein belongs to the glycosyl hydrolase 32 family.

It localises to the cytoplasm. The catalysed reaction is Hydrolysis of terminal non-reducing beta-D-fructofuranoside residues in beta-D-fructofuranosides.. The protein operates within glycan biosynthesis; sucrose metabolism. The protein is Sucrose-6-phosphate hydrolase (sacA) of Zymomonas mobilis subsp. mobilis (strain ATCC 31821 / ZM4 / CP4).